The sequence spans 594 residues: Isocitrate dehydrogenase kinase/phosphatase (594 aa).

ATP contacts are provided by residues A315 to M321 and K336. Residue D371 is part of the active site.

This sequence belongs to the AceK family.

It localises to the cytoplasm. It catalyses the reaction L-seryl-[isocitrate dehydrogenase] + ATP = O-phospho-L-seryl-[isocitrate dehydrogenase] + ADP + H(+). Bifunctional enzyme which can phosphorylate or dephosphorylate isocitrate dehydrogenase (IDH) on a specific serine residue. This is a regulatory mechanism which enables bacteria to bypass the Krebs cycle via the glyoxylate shunt in response to the source of carbon. When bacteria are grown on glucose, IDH is fully active and unphosphorylated, but when grown on acetate or ethanol, the activity of IDH declines drastically concomitant with its phosphorylation. This Klebsiella pneumoniae (strain 342) protein is Isocitrate dehydrogenase kinase/phosphatase.